A 308-amino-acid chain; its full sequence is tRNA pseudouridine synthase B (308 aa).

The active-site Nucleophile is the Asp-44.

The protein belongs to the pseudouridine synthase TruB family. Type 1 subfamily.

The catalysed reaction is uridine(55) in tRNA = pseudouridine(55) in tRNA. Functionally, responsible for synthesis of pseudouridine from uracil-55 in the psi GC loop of transfer RNAs. The sequence is that of tRNA pseudouridine synthase B from Bdellovibrio bacteriovorus (strain ATCC 15356 / DSM 50701 / NCIMB 9529 / HD100).